The chain runs to 797 residues: Xaa-Pro dipeptidyl-peptidase (797 aa).

Catalysis depends on charge relay system residues S370, D490, and H521.

It belongs to the peptidase S15 family. Homodimer.

The protein localises to the cytoplasm. It catalyses the reaction Hydrolyzes Xaa-Pro-|- bonds to release unblocked, N-terminal dipeptides from substrates including Ala-Pro-|-p-nitroanilide and (sequentially) Tyr-Pro-|-Phe-Pro-|-Gly-Pro-|-Ile.. Removes N-terminal dipeptides sequentially from polypeptides having unsubstituted N-termini provided that the penultimate residue is proline. In Lacticaseibacillus paracasei (strain ATCC 334 / BCRC 17002 / CCUG 31169 / CIP 107868 / KCTC 3260 / NRRL B-441) (Lactobacillus paracasei), this protein is Xaa-Pro dipeptidyl-peptidase.